Consider the following 234-residue polypeptide: Fibrillarin-like rRNA/tRNA 2'-O-methyltransferase (234 aa).

S-adenosyl-L-methionine-binding positions include 90 to 91, 109 to 110, 134 to 135, and 154 to 157; these read TT, EF, DA, and DIAQ.

Belongs to the methyltransferase superfamily. Fibrillarin family. As to quaternary structure, interacts with nop5. Component of box C/D small ribonucleoprotein (sRNP) particles that contain rpl7ae, FlpA and nop5, plus a guide RNA.

Its function is as follows. Involved in pre-rRNA and tRNA processing. Utilizes the methyl donor S-adenosyl-L-methionine to catalyze the site-specific 2'-hydroxyl methylation of ribose moieties in rRNA and tRNA. Site specificity is provided by a guide RNA that base pairs with the substrate. Methylation occurs at a characteristic distance from the sequence involved in base pairing with the guide RNA. The polypeptide is Fibrillarin-like rRNA/tRNA 2'-O-methyltransferase (Staphylothermus marinus (strain ATCC 43588 / DSM 3639 / JCM 9404 / F1)).